The following is a 279-amino-acid chain: HTH-type transcriptional regulator HdfR (279 aa).

Residues 1–58 (MDTELLKTFLEVSRTRHFGRAAESLYLTQSAVSFRIRQLENQLGVNLFTRHRNNIRLT) enclose the HTH lysR-type domain. Residues 18 to 37 (FGRAAESLYLTQSAVSFRIR) constitute a DNA-binding region (H-T-H motif).

This sequence belongs to the LysR transcriptional regulatory family.

Its function is as follows. Negatively regulates the transcription of the flagellar master operon flhDC by binding to the upstream region of the operon. The protein is HTH-type transcriptional regulator HdfR of Escherichia coli (strain SE11).